Here is a 231-residue protein sequence, read N- to C-terminus: Potassium/proton antiporter CemA (231 aa).

4 helical membrane-spanning segments follow: residues 7-27, 104-124, 154-174, and 189-209; these read FIPL…SFTF, IHTI…SVYS, ILFL…ELMI, and IISF…KYWI.

The protein belongs to the CemA family.

Its subcellular location is the plastid. The protein localises to the chloroplast inner membrane. The catalysed reaction is K(+)(in) + H(+)(out) = K(+)(out) + H(+)(in). In terms of biological role, contributes to K(+)/H(+) antiport activity by supporting proton efflux to control proton extrusion and homeostasis in chloroplasts in a light-dependent manner to modulate photosynthesis. Prevents excessive induction of non-photochemical quenching (NPQ) under continuous-light conditions. Indirectly promotes efficient inorganic carbon uptake into chloroplasts. This is Potassium/proton antiporter CemA from Pisum sativum (Garden pea).